Reading from the N-terminus, the 122-residue chain is Large ribosomal subunit protein uL14 (122 aa).

The protein belongs to the universal ribosomal protein uL14 family. Part of the 50S ribosomal subunit. Forms a cluster with proteins L3 and L19. In the 70S ribosome, L14 and L19 interact and together make contacts with the 16S rRNA in bridges B5 and B8.

Binds to 23S rRNA. Forms part of two intersubunit bridges in the 70S ribosome. This Chlorobaculum parvum (strain DSM 263 / NCIMB 8327) (Chlorobium vibrioforme subsp. thiosulfatophilum) protein is Large ribosomal subunit protein uL14.